The chain runs to 513 residues: GMP synthase [glutamine-hydrolyzing] (513 aa).

A Glutamine amidotransferase type-1 domain is found at 9–198 (LILVLDFGSQ…VRRVCDCIGE (190 aa)). The active-site Nucleophile is the C86. Catalysis depends on residues H172 and E174. Residues 199–388 (WSMENFIEIE…LGIPEHLVWR (190 aa)) enclose the GMPS ATP-PPase domain. An ATP-binding site is contributed by 226-232 (SGGVDSS).

As to quaternary structure, homodimer.

The catalysed reaction is XMP + L-glutamine + ATP + H2O = GMP + L-glutamate + AMP + diphosphate + 2 H(+). The protein operates within purine metabolism; GMP biosynthesis; GMP from XMP (L-Gln route): step 1/1. Functionally, catalyzes the synthesis of GMP from XMP. The chain is GMP synthase [glutamine-hydrolyzing] from Staphylococcus saprophyticus subsp. saprophyticus (strain ATCC 15305 / DSM 20229 / NCIMB 8711 / NCTC 7292 / S-41).